We begin with the raw amino-acid sequence, 295 residues long: 2-methylisocitrate lyase (295 aa).

45-47 provides a ligand contact to substrate; the sequence is SGG. Residues D85 and D87 each contribute to the Mg(2+) site. Substrate is bound by residues 123–124, R158, E188, 210–212, R241, and R270; these read CG and NIT.

It belongs to the isocitrate lyase/PEP mutase superfamily. Methylisocitrate lyase family. In terms of assembly, homotetramer; dimer of dimers. Mg(2+) is required as a cofactor.

The catalysed reaction is (2S,3R)-3-hydroxybutane-1,2,3-tricarboxylate = pyruvate + succinate. It participates in organic acid metabolism; propanoate degradation. Functionally, involved in the catabolism of short chain fatty acids (SCFA) via the 2-methylcitrate cycle I (propionate degradation route). Catalyzes the thermodynamically favored C-C bond cleavage of (2R,3S)-2-methylisocitrate to yield pyruvate and succinate via an alpha-carboxy-carbanion intermediate. The protein is 2-methylisocitrate lyase of Salmonella typhimurium (strain LT2 / SGSC1412 / ATCC 700720).